We begin with the raw amino-acid sequence, 113 residues long: Transmembrane protein 256 (113 aa).

The signal sequence occupies residues 1 to 29 (MAGVGAAFRRLGALSGAGALGLASYGAHG). Residues 30–63 (AQFPDAYGKELFDKANKHHFLHSLALLGVPSCRK) are Extracellular-facing. At Lys43 the chain carries N6-acetyllysine. Residues 64 to 84 (PVWAGLLLASGTTLFCTSFYY) form a helical membrane-spanning segment. Residues 85–92 (QALSGDTS) lie on the Cytoplasmic side of the membrane. Residues 93–113 (IQTLGPVGGSLLILGWLALAF) form a helical membrane-spanning segment.

It belongs to the TMEM256 family.

The protein resides in the membrane. The chain is Transmembrane protein 256 (Tmem256) from Mus musculus (Mouse).